A 347-amino-acid polypeptide reads, in one-letter code: Phosphoribosylformylglycinamidine cyclo-ligase (347 aa).

The protein belongs to the AIR synthase family.

It is found in the cytoplasm. It catalyses the reaction 2-formamido-N(1)-(5-O-phospho-beta-D-ribosyl)acetamidine + ATP = 5-amino-1-(5-phospho-beta-D-ribosyl)imidazole + ADP + phosphate + H(+). It participates in purine metabolism; IMP biosynthesis via de novo pathway; 5-amino-1-(5-phospho-D-ribosyl)imidazole from N(2)-formyl-N(1)-(5-phospho-D-ribosyl)glycinamide: step 2/2. This is Phosphoribosylformylglycinamidine cyclo-ligase from Prochlorococcus marinus (strain MIT 9301).